Reading from the N-terminus, the 214-residue chain is NADH-ubiquinone oxidoreductase chain 5 (214 aa).

4 consecutive transmembrane segments (helical) span residues 14-34 (LNTWALLLTLMATAFTATYSI), 58-78 (PLITAPLTRLALGSITAGMII), 92-112 (MPLITKTAAILMTILGIILAL), and 192-212 (TGLIKAYLGSFALSILVMILM).

Belongs to the complex I subunit 5 family.

The protein localises to the mitochondrion inner membrane. It carries out the reaction a ubiquinone + NADH + 5 H(+)(in) = a ubiquinol + NAD(+) + 4 H(+)(out). In terms of biological role, core subunit of the mitochondrial membrane respiratory chain NADH dehydrogenase (Complex I) that is believed to belong to the minimal assembly required for catalysis. Complex I functions in the transfer of electrons from NADH to the respiratory chain. The immediate electron acceptor for the enzyme is believed to be ubiquinone. The sequence is that of NADH-ubiquinone oxidoreductase chain 5 (MT-ND5) from Anser caerulescens (Snow goose).